A 334-amino-acid chain; its full sequence is O-methyltransferase SfmM3 (334 aa).

Residues Asp190 and 216 to 218 (GDF) each bind S-adenosyl-L-methionine. His236 functions as the Proton acceptor in the catalytic mechanism.

The protein belongs to the class I-like SAM-binding methyltransferase superfamily. Cation-independent O-methyltransferase family. COMT subfamily.

It carries out the reaction 5-hydroxy-3-methyl-L-tyrosine + S-adenosyl-L-methionine = 5-hydroxy-3-methyl-O-methyl-L-tyrosine + S-adenosyl-L-homocysteine + H(+). It participates in antibiotic biosynthesis. O-methyltransferase that mediates the methylation of 3-hydroxy-5-methyl-L-tyrosine (3-OH-5-Me-Tyr) into 3-hydroxy-5-methyl-O-methyltyrosine (3-OH-5-Me-OMe-Tyr), a core structure of saframycin A, a potent antitumor antibiotic that belongs to the tetrahydroisoquinoline family. The protein is O-methyltransferase SfmM3 of Streptomyces lavendulae.